The primary structure comprises 642 residues: Threonine--tRNA ligase (642 aa).

The TGS domain maps to 1-58 (MQVAGKELEVQQGALCGEVLKEALSKKQFKNVVVAKCGDTLLDLTTTVPADCTDLEPV). Positions 239 to 530 (DHRKLGTQLD…LLEHTGGALP (292 aa)) are catalytic. Zn(2+)-binding residues include Cys331, His382, and His507.

The protein belongs to the class-II aminoacyl-tRNA synthetase family. Homodimer. The cofactor is Zn(2+).

The protein localises to the cytoplasm. The enzyme catalyses tRNA(Thr) + L-threonine + ATP = L-threonyl-tRNA(Thr) + AMP + diphosphate + H(+). In terms of biological role, catalyzes the attachment of threonine to tRNA(Thr) in a two-step reaction: L-threonine is first activated by ATP to form Thr-AMP and then transferred to the acceptor end of tRNA(Thr). Also edits incorrectly charged L-seryl-tRNA(Thr). The protein is Threonine--tRNA ligase of Maridesulfovibrio salexigens (strain ATCC 14822 / DSM 2638 / NCIMB 8403 / VKM B-1763) (Desulfovibrio salexigens).